A 146-amino-acid polypeptide reads, in one-letter code: Large ribosomal subunit protein bL19 (146 aa).

It belongs to the bacterial ribosomal protein bL19 family.

Functionally, this protein is located at the 30S-50S ribosomal subunit interface and may play a role in the structure and function of the aminoacyl-tRNA binding site. The sequence is that of Large ribosomal subunit protein bL19 from Bartonella henselae (strain ATCC 49882 / DSM 28221 / CCUG 30454 / Houston 1) (Rochalimaea henselae).